The following is a 313-amino-acid chain: Ubiquinone biosynthesis protein COQ4, mitochondrial (313 aa).

Residues His197, Asp198, His201, and Glu213 each contribute to the Zn(2+) site. Residues 290–313 (QPPDLRELRRKQKKLPEPERENAN) form a disordered region. Residues 303 to 313 (KLPEPERENAN) show a composition bias toward basic and acidic residues.

It belongs to the COQ4 family. Component of a multi-subunit COQ enzyme complex, composed of at least COQ3, COQ4, COQ5, COQ6, COQ7 and COQ9. Zn(2+) serves as cofactor.

It localises to the mitochondrion inner membrane. It catalyses the reaction a 4-hydroxy-3-methoxy-5-(all-trans-polyprenyl)benzoate + H(+) = a 2-methoxy-6-(all-trans-polyprenyl)phenol + CO2. It functions in the pathway cofactor biosynthesis; ubiquinone biosynthesis. Its function is as follows. Lyase that catalyzes the C1-decarboxylation of 4-hydroxy-3-methoxy-5-(all-trans-polyprenyl)benzoic acid into 2-methoxy-6-(all-trans-polyprenyl)phenol during ubiquinone biosynthesis. The chain is Ubiquinone biosynthesis protein COQ4, mitochondrial from Meyerozyma guilliermondii (strain ATCC 6260 / CBS 566 / DSM 6381 / JCM 1539 / NBRC 10279 / NRRL Y-324) (Yeast).